The following is a 76-amino-acid chain: Omega-conotoxin-like TxO1 (76 aa).

Residues 1–22 (MKLTCVVIVAVLFLTVWTFATA) form the signal peptide. A propeptide spanning residues 23–50 (DDSGNGLEKLFSNAHHEMKNPEASKLNE) is cleaved from the precursor. Intrachain disulfides connect Cys-52-Cys-67, Cys-59-Cys-70, and Cys-66-Cys-75.

It belongs to the conotoxin O1 superfamily. Expressed by the venom duct.

Its subcellular location is the secreted. Functionally, omega-conotoxins act at presynaptic membranes, they bind and block voltage-gated calcium channels (Cav). The sequence is that of Omega-conotoxin-like TxO1 from Conus textile (Cloth-of-gold cone).